Consider the following 266-residue polypeptide: Undecaprenyl-diphosphatase (266 aa).

Helical transmembrane passes span 41 to 61 (NLAF…VILW), 82 to 102 (YVIN…FFKD), 106 to 126 (AIFG…AALL), 140 to 160 (ISMK…LPGL), 180 to 200 (LAQF…LLDG), 213 to 233 (IPTL…CLAC), and 245 to 265 (LIYF…VSQL).

The protein belongs to the UppP family.

It localises to the cell inner membrane. It carries out the reaction di-trans,octa-cis-undecaprenyl diphosphate + H2O = di-trans,octa-cis-undecaprenyl phosphate + phosphate + H(+). Functionally, catalyzes the dephosphorylation of undecaprenyl diphosphate (UPP). Confers resistance to bacitracin. The protein is Undecaprenyl-diphosphatase of Bacteroides fragilis (strain YCH46).